The chain runs to 530 residues: Potassium voltage-gated channel subfamily A member 6 (530 aa).

The segment at 1-35 (MRSEKSLTLAAPGEVRGPEGEQQDAGEFQEAEGGG) is disordered. Ser3 is subject to Phosphoserine. Residues 21-30 (EQQDAGEFQE) show a composition bias toward acidic residues. Residues 172 to 193 (PARGIAIVSVLVILISIVIFCL) traverse the membrane as a helical segment. Residues 203–239 (GRGGSNEGSGTRMSPASRGSHEEEDEDEDSYAFPGSI) form a disordered region. The residue at position 222 (Ser222) is a Phosphoserine; by CK2. The helical transmembrane segment at 264-285 (FFLVETLCIVWFTFELLVRFSA) threads the bilayer. Residue Cys286 is the site of S-palmitoyl cysteine attachment. The helical transmembrane segment at 297 to 317 (MNIIDLVAIFPYFITLGTELV) threads the bilayer. The helical; Voltage-sensor transmembrane segment at 339-359 (LAILRVIRLVRVFRIFKLSRH) threads the bilayer. The segment at 361 to 374 (KGLQILGKTLQASM) is S4-S5 linker. The helical transmembrane segment at 375 to 396 (RELGLLIFFLFIGVILFSSAVY) threads the bilayer. An intramembrane region (helical) is located at residues 411 to 422 (PDAFWWAVVTMT). The Selectivity filter signature appears at 423–428 (TVGYGD). The stretch at 423–430 (TVGYGDMY) is an intramembrane region. The helical transmembrane segment at 438–466 (IVGSLCAIAGVLTIALPVPVIVSNFNYFY) threads the bilayer. Ser512 carries the phosphoserine; by PKA modification. The PDZ-binding signature appears at 527 to 529 (LTE). At Thr528 the chain carries Phosphothreonine; by PKA.

It belongs to the potassium channel family. A (Shaker) (TC 1.A.1.2) subfamily. Kv1.6/KCNA6 sub-subfamily. In terms of assembly, homotetramer and heterotetramer of potassium channel proteins. Interacts with KCNAB1 and KCNAB2.

Its subcellular location is the cell membrane. The enzyme catalyses K(+)(in) = K(+)(out). Functionally, voltage-gated potassium channel that mediates transmembrane potassium transport in excitable membranes. Forms tetrameric potassium-selective channels through which potassium ions pass in accordance with their electrochemical gradient. The channel alternates between opened and closed conformations in response to the voltage difference across the membrane. Can form functional homotetrameric channels and heterotetrameric channels that contain variable proportions of KCNA1, KCNA2, KCNA4, KNCA5, KCNA6, and possibly other family members as well; channel properties depend on the type of alpha subunits that are part of the channel. Channel properties are modulated by cytoplasmic beta subunits that regulate the subcellular location of the alpha subunits and promote rapid inactivation. Homotetrameric channels display rapid activation and slow inactivation. This chain is Potassium voltage-gated channel subfamily A member 6 (Kcna6), found in Rattus norvegicus (Rat).